A 1138-amino-acid polypeptide reads, in one-letter code: Transmembrane channel-like protein 3 (1138 aa).

The segment covering 1–15 (MEAAPGTAAAAAKPA) has biased composition (low complexity). Disordered stretches follow at residues 1-20 (MEAA…SCKK) and 29-54 (NIYT…DSQD). Topologically, residues 1-155 (MEAAPGTAAA…VASYFIFLRW (155 aa)) are cytoplasmic. A helical membrane pass occupies residues 156 to 176 (LFGINIVLTIMTGAFVVLPEL). The Extracellular segment spans residues 177-202 (LAGAPFGSTVSKTIRQEDLKTAQDLD). A helical membrane pass occupies residues 203–223 (TIWSLGGYLQYSVLFYGYYGS). Over 224-233 (DRKIGKAGYR) the chain is Cytoplasmic. Residues 234 to 254 (LPLAYFLVGMAVFAYSFIILL) traverse the membrane as a helical segment. Topologically, residues 255–327 (KKMAKNSRMS…KNLAVTISLR (73 aa)) are extracellular. N272 is a glycosylation site (N-linked (GlcNAc...) asparagine). A helical membrane pass occupies residues 328-348 (IIANILVLLSLTGSIYIIYFV). Residues 349–369 (VDRSQKLENNKRELTLWEKNE) are Cytoplasmic-facing. A helical membrane pass occupies residues 370-390 (VSVVVSLITMIAPSAFELVAA). The Extracellular segment spans residues 391–401 (LEMYHPRTTLR). Residues 402-422 (FQLARVLVLYLGNLYSLIIAL) traverse the membrane as a helical segment. The Cytoplasmic segment spans residues 423 to 508 (LDKVNSMSVT…CWETYVGQEM (86 aa)). Residues 509-529 (LKLSIIDMIFTVASILLIDFF) traverse the membrane as a helical segment. Residues 530–569 (RGLCVRYLSDCWCWDLESKFPEYGEFKIAENVLHLVYNQG) lie on the Extracellular side of the membrane. Residues 570-590 (MIWMGAFFSPCLPAFNVLKLI) form a helical membrane-spanning segment. Topologically, residues 591–618 (GLMYLRSWAVLTCNVPHQQVFRASRSNN) are cytoplasmic. A helical membrane pass occupies residues 619 to 639 (FYLAMLLFMLFLCMLPTIFAI). At 640-676 (ARYKPSLSCGPFSGQEKIYDIVSETIQNDFPAWFNSV) the chain is on the extracellular side. A helical membrane pass occupies residues 677 to 697 (IAYISSPVVVLPALLLLFMLI). Topologically, residues 698–1138 (YYLQSIARSL…EPNELVCSNV (441 aa)) are cytoplasmic. Positions 753–763 (NSEGTRFQSLD) are enriched in polar residues. Disordered stretches follow at residues 753-859 (NSEG…RYPS), 973-1005 (SPHP…DLRP), and 1065-1095 (PKTK…SSND). The segment covering 764-773 (GSDKRPDKDG) has biased composition (basic and acidic residues). Composition is skewed to polar residues over residues 777–795 (SQES…SVLN) and 804–813 (TRIQTISQTV). The span at 828–845 (TTPTTSASLTPAPSVSSA) shows a compositional bias: low complexity. A compositionally biased stretch (basic residues) spans 989 to 998 (HYVKRSHRPR). Low complexity predominate over residues 1074 to 1095 (SLTESDSVSIESSSDPQNSSND).

The protein belongs to the TMC family. Expressed in a range of tissues including cerebrum, cerebellum, retina, cochlea, lung, liver and heart. Also expressed in the apical, medial and basal portions of the basillar papilla.

Its subcellular location is the membrane. Its function is as follows. Probable component of an ion channel. This Gallus gallus (Chicken) protein is Transmembrane channel-like protein 3.